The sequence spans 512 residues: Cytochrome P450 76C2 (512 aa).

The helical transmembrane segment at 3–23 (IIFEQALFPLFCFVLSFFIIF) threads the bilayer. A heme-binding site is contributed by Cys451.

This sequence belongs to the cytochrome P450 family. The cofactor is heme.

Its subcellular location is the membrane. In Arabidopsis thaliana (Mouse-ear cress), this protein is Cytochrome P450 76C2 (CYP76C2).